The primary structure comprises 412 residues: Glucose-1-phosphate adenylyltransferase (412 aa).

Alpha-D-glucose 1-phosphate contacts are provided by residues Tyr98, Gly163, 178–179 (EK), and Ser189.

The protein belongs to the bacterial/plant glucose-1-phosphate adenylyltransferase family. Homotetramer.

It carries out the reaction alpha-D-glucose 1-phosphate + ATP + H(+) = ADP-alpha-D-glucose + diphosphate. It participates in glycan biosynthesis; glycogen biosynthesis. Its function is as follows. Involved in the biosynthesis of ADP-glucose, a building block required for the elongation reactions to produce glycogen. Catalyzes the reaction between ATP and alpha-D-glucose 1-phosphate (G1P) to produce pyrophosphate and ADP-Glc. The protein is Glucose-1-phosphate adenylyltransferase of Thermosipho africanus (strain TCF52B).